A 101-amino-acid polypeptide reads, in one-letter code: Phosphoribosyl-AMP cyclohydrolase (101 aa).

Position 71 (D71) interacts with Mg(2+). C72 contacts Zn(2+). The Mg(2+) site is built by D73 and D75. Zn(2+) is bound by residues C88 and C95.

This sequence belongs to the PRA-CH family. In terms of assembly, homodimer. The cofactor is Mg(2+). Requires Zn(2+) as cofactor.

The protein localises to the cytoplasm. It catalyses the reaction 1-(5-phospho-beta-D-ribosyl)-5'-AMP + H2O = 1-(5-phospho-beta-D-ribosyl)-5-[(5-phospho-beta-D-ribosylamino)methylideneamino]imidazole-4-carboxamide. It functions in the pathway amino-acid biosynthesis; L-histidine biosynthesis; L-histidine from 5-phospho-alpha-D-ribose 1-diphosphate: step 3/9. Catalyzes the hydrolysis of the adenine ring of phosphoribosyl-AMP. In Bacillus cereus (strain G9842), this protein is Phosphoribosyl-AMP cyclohydrolase.